The primary structure comprises 125 residues: Cu-Zn superoxide dismutase-like protein (125 aa).

C52 and C102 form a disulfide bridge.

The protein belongs to the Cu-Zn superoxide dismutase family.

The protein resides in the host cytoplasm. In terms of biological role, virion protein with no enzymatic activity. The chain is Cu-Zn superoxide dismutase-like protein from Bos taurus (Bovine).